The chain runs to 142 residues: Large ribosomal subunit protein uL13 (142 aa).

This sequence belongs to the universal ribosomal protein uL13 family. Part of the 50S ribosomal subunit.

Functionally, this protein is one of the early assembly proteins of the 50S ribosomal subunit, although it is not seen to bind rRNA by itself. It is important during the early stages of 50S assembly. This Klebsiella pneumoniae (strain 342) protein is Large ribosomal subunit protein uL13.